We begin with the raw amino-acid sequence, 145 residues long: Meiotically up-regulated gene 124 protein (145 aa).

The next 2 helical transmembrane spans lie at 18 to 38 (IILTIINSLVYLVNFISCPSI) and 95 to 115 (FAWSCALPCFVDSFFPSNFFL).

The protein localises to the membrane. Its function is as follows. Has a role in meiosis. The chain is Meiotically up-regulated gene 124 protein (mug124) from Schizosaccharomyces pombe (strain 972 / ATCC 24843) (Fission yeast).